Reading from the N-terminus, the 206-residue chain is Flavin reductase (NADPH) (206 aa).

NADP(+)-binding residues include G10, T12, G13, Q14, T15, R35, S38, and R39. Position 42 is a phosphoserine (S42). NADP(+) is bound by residues D54, V55, L75, G76, and R78. A Phosphoserine modification is found at S82. NADP(+) contacts are provided by M87, C109, H132, H153, and I154. C109 serves as the catalytic S-nitroso-cysteine intermediate; for S-nitroso-CoA-dependent nitrosyltransferase activity. Residue C188 is the S-nitroso-cysteine intermediate; for S-nitroso-CoA-dependent nitrosyltransferase activity of the active site.

The protein belongs to the BLVRB family. In terms of assembly, monomer. As to expression, predominantly expressed in liver and erythrocytes. At lower levels in heart, lung, adrenal gland and cerebrum. Expressed in adult red blood cells.

The protein localises to the cytoplasm. It catalyses the reaction reduced riboflavin + NADP(+) = riboflavin + NADPH + 2 H(+). The enzyme catalyses bilirubin IXbeta + NADP(+) = biliverdin IXbeta + NADPH + H(+). It carries out the reaction FMNH2 + NAD(+) = FMN + NADH + 2 H(+). The catalysed reaction is FMNH2 + NADP(+) = FMN + NADPH + 2 H(+). It catalyses the reaction S-nitroso-CoA + L-cysteinyl-[protein] = S-nitroso-L-cysteinyl-[protein] + CoA. The enzyme catalyses L-cysteinyl-[SCAN] + S-nitroso-CoA = S-nitroso-L-cysteinyl-[SCAN] + CoA. It carries out the reaction S-nitroso-L-cysteinyl-[SCAN] + L-cysteinyl-[protein] = L-cysteinyl-[SCAN] + S-nitroso-L-cysteinyl-[protein]. Its activity is regulated as follows. Mesobiliverdin acts as a competitive inhibitor for flavin reduction, indicating that flavin and tetrapyrrole substrates compete for the same site. Inhibited by a wide range of xanthene-based drugs, such as phloxine B, erythrosin B, tamibarotene, sulfasalazine, olsalazine, febuxostat, ataluren (PTC124) and deferasirox. Enzyme that can both act as a NAD(P)H-dependent reductase and a S-nitroso-CoA-dependent nitrosyltransferase. Promotes fetal heme degradation during development. Also expressed in adult tissues, where it acts as a regulator of hematopoiesis, intermediary metabolism (glutaminolysis, glycolysis, TCA cycle and pentose phosphate pathway) and insulin signaling. Has a broad specificity oxidoreductase activity by catalyzing the NAD(P)H-dependent reduction of a variety of flavins, such as riboflavin, FAD or FMN, biliverdins, methemoglobin and PQQ (pyrroloquinoline quinone). Contributes to fetal heme catabolism by catalyzing reduction of biliverdin IXbeta into bilirubin IXbeta in the liver. Biliverdin IXbeta, which constitutes the major heme catabolite in the fetus is not present in adult. Does not reduce bilirubin IXalpha. Can also reduce the complexed Fe(3+) iron to Fe(2+) in the presence of FMN and NADPH. Acts as a protein nitrosyltransferase by catalyzing nitrosylation of cysteine residues of target proteins, such as HMOX2, INSR and IRS1. S-nitroso-CoA-dependent nitrosyltransferase activity is mediated via a 'ping-pong' mechanism: BLVRB first associates with both S-nitroso-CoA and protein substrate, nitric oxide group is then transferred from S-nitroso-CoA to Cys-109 and Cys-188 residues of BLVRB and from S-nitroso-BLVRB to the protein substrate. Inhibits insulin signaling by mediating nitrosylation of INSR and IRS1, leading to their inhibition. This chain is Flavin reductase (NADPH), found in Homo sapiens (Human).